We begin with the raw amino-acid sequence, 183 residues long: Ribulose bisphosphate carboxylase small subunit, chloroplastic (183 aa).

Residues methionine 1–glutamine 59 constitute a chloroplast transit peptide.

Belongs to the RuBisCO small chain family. Heterohexadecamer of 8 large and 8 small subunits.

The protein resides in the plastid. The protein localises to the chloroplast. In terms of biological role, ruBisCO catalyzes two reactions: the carboxylation of D-ribulose 1,5-bisphosphate, the primary event in carbon dioxide fixation, as well as the oxidative fragmentation of the pentose substrate. Both reactions occur simultaneously and in competition at the same active site. Although the small subunit is not catalytic it is essential for maximal activity. The sequence is that of Ribulose bisphosphate carboxylase small subunit, chloroplastic from Malus sp. (Crab apple).